The primary structure comprises 201 residues: Probable GTP-binding protein EngB (201 aa).

One can recognise an EngB-type G domain in the interval 22-195 (SLPEIAFCGR…MEQLEMILKY (174 aa)). GTP-binding positions include 30 to 37 (GRSNVGKS), 57 to 61 (GKTRT), 75 to 78 (DLPG), 142 to 145 (TKLD), and 174 to 176 (YSS). Residues S37 and T59 each coordinate Mg(2+).

This sequence belongs to the TRAFAC class TrmE-Era-EngA-EngB-Septin-like GTPase superfamily. EngB GTPase family. Requires Mg(2+) as cofactor.

Necessary for normal cell division and for the maintenance of normal septation. This is Probable GTP-binding protein EngB from Finegoldia magna (strain ATCC 29328 / DSM 20472 / WAL 2508) (Peptostreptococcus magnus).